A 156-amino-acid chain; its full sequence is Small ribosomal subunit protein uS7 (156 aa).

The protein belongs to the universal ribosomal protein uS7 family. Part of the 30S ribosomal subunit. Contacts proteins S9 and S11.

Its function is as follows. One of the primary rRNA binding proteins, it binds directly to 16S rRNA where it nucleates assembly of the head domain of the 30S subunit. Is located at the subunit interface close to the decoding center, probably blocks exit of the E-site tRNA. The sequence is that of Small ribosomal subunit protein uS7 from Haemophilus influenzae (strain 86-028NP).